A 190-amino-acid chain; its full sequence is UPF0301 protein Rmet_2743 (190 aa).

It belongs to the UPF0301 (AlgH) family.

This Cupriavidus metallidurans (strain ATCC 43123 / DSM 2839 / NBRC 102507 / CH34) (Ralstonia metallidurans) protein is UPF0301 protein Rmet_2743.